The following is a 301-amino-acid chain: Probable alpha-L-glutamate ligase 1 (301 aa).

Residues Met104–Glu287 form the ATP-grasp domain. ATP is bound by residues Lys141, Glu178–Tyr179, Asp187, and Arg211–Asn213. Residues Asp248, Glu260, and Asn262 each contribute to the Mg(2+) site. Residues Asp248, Glu260, and Asn262 each contribute to the Mn(2+) site.

This sequence belongs to the RimK family. The cofactor is Mg(2+). Mn(2+) is required as a cofactor.

This is Probable alpha-L-glutamate ligase 1 from Shewanella putrefaciens (strain CN-32 / ATCC BAA-453).